The primary structure comprises 299 residues: ATP synthase gamma chain (299 aa).

This sequence belongs to the ATPase gamma chain family. As to quaternary structure, F-type ATPases have 2 components, CF(1) - the catalytic core - and CF(0) - the membrane proton channel. CF(1) has five subunits: alpha(3), beta(3), gamma(1), delta(1), epsilon(1). CF(0) has three main subunits: a, b and c.

It is found in the cell membrane. In terms of biological role, produces ATP from ADP in the presence of a proton gradient across the membrane. The gamma chain is believed to be important in regulating ATPase activity and the flow of protons through the CF(0) complex. This Clavibacter michiganensis subsp. michiganensis (strain NCPPB 382) protein is ATP synthase gamma chain.